The primary structure comprises 128 residues: Large ribosomal subunit protein bL12 (128 aa).

It belongs to the bacterial ribosomal protein bL12 family. As to quaternary structure, homodimer. Part of the ribosomal stalk of the 50S ribosomal subunit. Forms a multimeric L10(L12)X complex, where L10 forms an elongated spine to which 2 to 4 L12 dimers bind in a sequential fashion. Binds GTP-bound translation factors.

Functionally, forms part of the ribosomal stalk which helps the ribosome interact with GTP-bound translation factors. Is thus essential for accurate translation. The protein is Large ribosomal subunit protein bL12 of Saccharopolyspora erythraea (strain ATCC 11635 / DSM 40517 / JCM 4748 / NBRC 13426 / NCIMB 8594 / NRRL 2338).